Here is a 228-residue protein sequence, read N- to C-terminus: Translation initiation factor 6 (228 aa).

This sequence belongs to the eIF-6 family.

Its function is as follows. Binds to the 50S ribosomal subunit and prevents its association with the 30S ribosomal subunit to form the 70S initiation complex. The protein is Translation initiation factor 6 of Thermococcus onnurineus (strain NA1).